We begin with the raw amino-acid sequence, 290 residues long: Lipoyl synthase (290 aa).

[4Fe-4S] cluster contacts are provided by Cys38, Cys43, Cys49, Cys64, Cys68, Cys71, and Ser277. The Radical SAM core domain maps to 50 to 266 (WSKGTATFLL…REIALDAGFR (217 aa)).

This sequence belongs to the radical SAM superfamily. Lipoyl synthase family. Requires [4Fe-4S] cluster as cofactor.

It localises to the cytoplasm. It carries out the reaction [[Fe-S] cluster scaffold protein carrying a second [4Fe-4S](2+) cluster] + N(6)-octanoyl-L-lysyl-[protein] + 2 oxidized [2Fe-2S]-[ferredoxin] + 2 S-adenosyl-L-methionine + 4 H(+) = [[Fe-S] cluster scaffold protein] + N(6)-[(R)-dihydrolipoyl]-L-lysyl-[protein] + 4 Fe(3+) + 2 hydrogen sulfide + 2 5'-deoxyadenosine + 2 L-methionine + 2 reduced [2Fe-2S]-[ferredoxin]. The protein operates within protein modification; protein lipoylation via endogenous pathway; protein N(6)-(lipoyl)lysine from octanoyl-[acyl-carrier-protein]: step 2/2. Catalyzes the radical-mediated insertion of two sulfur atoms into the C-6 and C-8 positions of the octanoyl moiety bound to the lipoyl domains of lipoate-dependent enzymes, thereby converting the octanoylated domains into lipoylated derivatives. This Chlorobaculum tepidum (strain ATCC 49652 / DSM 12025 / NBRC 103806 / TLS) (Chlorobium tepidum) protein is Lipoyl synthase.